A 452-amino-acid chain; its full sequence is Selenide, water dikinase 2 (452 aa).

The residue at position 2 (Ala-2) is an N-acetylalanine. Ser-49 carries the post-translational modification Phosphoserine. Sec-63 is an active-site residue. Position 63 (Sec-63) is a non-standard amino acid, selenocysteine. Lys-66 contributes to the ATP binding site. The segment at 86 to 111 (PPLTSGLVGGQEETVQEGGLSTRPGP) is disordered. Low complexity predominate over residues 95 to 105 (GQEETVQEGGL). Residues 121 to 123 (GMD), Asp-141, Asp-164, and 215 to 218 (GGQT) contribute to the ATP site. Position 123 (Asp-123) interacts with Mg(2+). Residue Asp-164 participates in Mg(2+) binding. A Mg(2+)-binding site is contributed by Asp-319.

This sequence belongs to the selenophosphate synthase 1 family. Class I subfamily. Homodimer. Mg(2+) is required as a cofactor. Truncated SEPHS2 proteins produced by failed UGA/Sec decoding are ubiquitinated by the CRL2(KLHDC3) complex, which recognizes the glycine (Gly) at the C-terminus of truncated SEPHS2 proteins.

The enzyme catalyses hydrogenselenide + ATP + H2O = selenophosphate + AMP + phosphate + 2 H(+). In terms of biological role, synthesizes selenophosphate from selenide and ATP. This chain is Selenide, water dikinase 2 (Sephs2), found in Mus musculus (Mouse).